Consider the following 674-residue polypeptide: Transcription activator of gluconeogenesis PMAA_028970 (674 aa).

The disordered stretch occupies residues 1–46 (MMDTDKDDLPSATDHSEHESGDAVKVEGGASKTASNSKDPSRPRRK). Residues 14–25 (DHSEHESGDAVK) are compositionally biased toward basic and acidic residues. Residues 52 to 80 (CFACQRAHLTCGDERPCQRCIKRGLQDAC) constitute a DNA-binding region (zn(2)-C6 fungal-type). 4 disordered regions span residues 117 to 181 (ISPT…ATPA), 250 to 321 (TGAG…SGLY), 344 to 374 (IGSN…SPMK), and 519 to 557 (NLNV…PGPN). A compositionally biased stretch (polar residues) spans 120–148 (TEYTQNGTNNAQQQQQKSGTIYASSTPSY). Residues 149-163 (NNNNGTFDTNNATNT) show a composition bias toward low complexity. 2 stretches are compositionally biased toward polar residues: residues 269–278 (GQRSNSQQFG) and 285–294 (TTESPSQQSF). Low complexity-rich tracts occupy residues 348–366 (TFAS…IAPS) and 529–540 (NTSSQSDSTSSS).

This sequence belongs to the ERT1/acuK family.

The protein localises to the nucleus. Its function is as follows. Transcription factor which regulates nonfermentable carbon utilization. Activator of gluconeogenetic genes. This is Transcription activator of gluconeogenesis PMAA_028970 from Talaromyces marneffei (strain ATCC 18224 / CBS 334.59 / QM 7333) (Penicillium marneffei).